The chain runs to 585 residues: Probable inactive serine/threonine-protein kinase slob1 (585 aa).

The segment at 21–82 (DQSSLECNDC…LCRSCNNSFE (62 aa)) adopts an FYVE-type zinc-finger fold. The Zn(2+) site is built by Cys27, Cys30, Cys43, Cys46, Cys51, Cys54, Cys74, and Cys77. Positions 108–478 (SKPLQDIGHT…STSLLNNSFN (371 aa)) constitute a Protein kinase domain. Composition is skewed to low complexity over residues 426–456 (ISKL…NISS) and 466–503 (LPSS…ISSP). The interval 426–585 (ISKLSSSSSN…SLKPSSTKKK (160 aa)) is disordered. Pro residues predominate over residues 513 to 532 (TPPPPPPPPKSAPPPPPPPS). Positions 533-542 (SSKLPPSSSS) are enriched in low complexity. A WH2 domain is found at 542–562 (SRNSLLESIRNADNAKKLKKT).

The protein belongs to the protein kinase superfamily. Ser/Thr protein kinase family.

In Dictyostelium discoideum (Social amoeba), this protein is Probable inactive serine/threonine-protein kinase slob1 (slob1).